Consider the following 360-residue polypeptide: Peptide chain release factor 1 (360 aa).

At Q235 the chain carries N5-methylglutamine.

The protein belongs to the prokaryotic/mitochondrial release factor family. In terms of processing, methylated by PrmC. Methylation increases the termination efficiency of RF1.

Its subcellular location is the cytoplasm. Its function is as follows. Peptide chain release factor 1 directs the termination of translation in response to the peptide chain termination codons UAG and UAA. This Burkholderia ambifaria (strain MC40-6) protein is Peptide chain release factor 1.